The primary structure comprises 324 residues: MECRSLDLTIISAEDLKDVQLIGKQDLYAVVSINGDARTKQKTKVDKDCGTKPKWKHQMKLTVDDAAARDNRLTLVFEIVADRPIAGDKPVGEVSVPVKELLDQNKGDEEKTVTYAVRLPNGKAKGSLKFSFKFGEKYTYGSSSGPHAPVPSAMDHKTMDQPVTAYPPGHGAPSAYPAPPAGPSSGYPPQGHDDKHDGVYGYPQQAGYPAGTGGYPPPGAYPQQGGYPGYPPQQQGGYPGYPPQGPYGYPQQGYPPQGPYGYPQQQAHGKPQKPKKHGKAGAGMGLGLGLGAGLLGGLLVGEAVSDIADMGDMGDMGDMGGFDF.

Residues 1–111 (MECRSLDLTI…LDQNKGDEEK (111 aa)) form the C2 domain. The Cytoplasmic segment spans residues 1 to 279 (MECRSLDLTI…KPQKPKKHGK (279 aa)). The disordered stretch occupies residues 141 to 281 (GSSSGPHAPV…QKPKKHGKAG (141 aa)). Composition is skewed to low complexity over residues 166-175 (YPPGHGAPSA) and 246-269 (PYGY…QAHG). Basic residues predominate over residues 270–279 (KPQKPKKHGK). A helical; Signal-anchor transmembrane segment spans residues 280-300 (AGAGMGLGLGLGAGLLGGLLV). The Lumenal portion of the chain corresponds to 301–324 (GEAVSDIADMGDMGDMGDMGGFDF).

As to quaternary structure, interacts with RBOHF (via N-terminus).

The protein resides in the endoplasmic reticulum membrane. The protein localises to the protein storage vacuole membrane. It is found in the cell membrane. In terms of biological role, may act as an activator of the calcium-dependent activation of RBOHF that mediates reactive oxygen species (ROS) production and may play a role in cold responses. In Arabidopsis thaliana (Mouse-ear cress), this protein is Protein SRC2 homolog.